The following is a 574-amino-acid chain: Glycine--tRNA ligase (574 aa).

Substrate contacts are provided by Arg96 and Glu162. Residues 194 to 196 (RNE), 204 to 209 (IRLREF), 327 to 328 (EC), and 450 to 453 (GIDR) each bind ATP. Residue 209-213 (FTQAE) participates in substrate binding. Residue 446–450 (EPSYG) coordinates substrate.

This sequence belongs to the class-II aminoacyl-tRNA synthetase family.

It is found in the cytoplasm. It carries out the reaction tRNA(Gly) + glycine + ATP = glycyl-tRNA(Gly) + AMP + diphosphate. In terms of biological role, catalyzes the attachment of glycine to tRNA(Gly). The sequence is that of Glycine--tRNA ligase from Methanococcus maripaludis (strain C7 / ATCC BAA-1331).